The chain runs to 838 residues: V-type proton ATPase 116 kDa subunit a 1 (838 aa).

Over 1–388 (MGELFRSEEM…DAYGIGTYRE (388 aa)) the chain is Cytoplasmic. Residues threonine 250 and threonine 360 each carry the phosphothreonine modification. Tyrosine 364 is modified (phosphotyrosine). A helical membrane pass occupies residues 389–407 (INPAPYTVITFPFLFAVMF). Over 408-409 (GD) the chain is Vacuolar. A helical transmembrane segment spans residues 410–426 (FGHGILMTLFAVWMVLR). Residues 427–441 (ESRILSQKNENEMFS) are Cytoplasmic-facing. Residues 442-471 (MVFSGRYIILLMGLFSIYTGLIYNDCFSKS) form a helical membrane-spanning segment. At 472–535 (LNIFGSSWSV…ATNKLTFLNS (64 aa)) the chain is on the vacuolar side. Residues 536–555 (FKMKMSVILGIIHMLFGVSL) form a helical membrane-spanning segment. At 556 to 573 (SLFNHIYFKKPLNIYFGF) the chain is on the cytoplasmic side. Residues 574–594 (IPEIIFMSSLFGYLVILIFYK) traverse the membrane as a helical segment. Residues 595–639 (WTAYDAHSSRNAPSLLIHFINMFLFSYPESGNAMLYSGQKGIQCF) are Vacuolar-facing. A helical transmembrane segment spans residues 640–659 (LIVVAMLCVPWMLLFKPLIL). Over 660–725 (RHQYLRKKHL…DTMVHQAIHT (66 aa)) the chain is Cytoplasmic. The helical transmembrane segment at 726-750 (IEYCLGCISNTASYLRLWALSLAHA) threads the bilayer. At 751–771 (QLSEVLWTMVIHIGLHVRSLA) the chain is on the vacuolar side. Residues 772 to 810 (GGLGLFFIFAAFATLTVAILLIMEGLSAFLHALRLHWVE) form a helical membrane-spanning segment. At 811 to 838 (FQNKFYTGTGFKFLPFSFEHIREGKFDE) the chain is on the cytoplasmic side.

This sequence belongs to the V-ATPase 116 kDa subunit family. V-ATPase is a heteromultimeric enzyme made up of two complexes: the ATP-hydrolytic V1 complex and the proton translocation V0 complex. The V1 complex consists of three catalytic AB heterodimers that form a heterohexamer, three peripheral stalks each consisting of EG heterodimers, one central rotor including subunits D and F, and the regulatory subunits C and H. The proton translocation complex V0 consists of the proton transport subunit a, a ring of proteolipid subunits c9c'', rotary subunit d, subunits e and f, and the accessory subunits ATP6AP1/Ac45 and ATP6AP2/PRR. Interacts with SPAAR. In terms of tissue distribution, expressed in brain (at protein level). Expressed in heart, kidney, liver, spleen, and to a lesser extent in brain.

Its subcellular location is the cytoplasmic vesicle. It localises to the clathrin-coated vesicle membrane. The protein resides in the secretory vesicle. The protein localises to the synaptic vesicle membrane. It is found in the melanosome. Functionally, subunit of the V0 complex of vacuolar(H+)-ATPase (V-ATPase), a multisubunit enzyme composed of a peripheral complex (V1) that hydrolyzes ATP and a membrane integral complex (V0) that translocates protons. V-ATPase is responsible for the acidification of various organelles, such as lysosomes, endosomes, the trans-Golgi network, and secretory granules, including synaptic vesicles. In certain cell types, can be exported to the plasma membrane, where it is involved in the acidification of the extracellular environment. Required for assembly and activity of the vacuolar ATPase. Through its action on compartment acidification, plays an essential role in neuronal development in terms of integrity and connectivity of neurons. This Rattus norvegicus (Rat) protein is V-type proton ATPase 116 kDa subunit a 1 (Atp6v0a1).